A 355-amino-acid chain; its full sequence is Peptide chain release factor 1 (355 aa).

An N5-methylglutamine modification is found at Gln233.

This sequence belongs to the prokaryotic/mitochondrial release factor family. Methylated by PrmC. Methylation increases the termination efficiency of RF1.

It is found in the cytoplasm. Functionally, peptide chain release factor 1 directs the termination of translation in response to the peptide chain termination codons UAG and UAA. This chain is Peptide chain release factor 1, found in Syntrophomonas wolfei subsp. wolfei (strain DSM 2245B / Goettingen).